Here is a 415-residue protein sequence, read N- to C-terminus: Glucose-1-phosphate adenylyltransferase (415 aa).

Alpha-D-glucose 1-phosphate-binding positions include Tyr100, Gly165, 182 to 183 (EK), and Ser200.

This sequence belongs to the bacterial/plant glucose-1-phosphate adenylyltransferase family. Homotetramer.

The catalysed reaction is alpha-D-glucose 1-phosphate + ATP + H(+) = ADP-alpha-D-glucose + diphosphate. Its pathway is glycan biosynthesis; glycogen biosynthesis. Its function is as follows. Involved in the biosynthesis of ADP-glucose, a building block required for the elongation reactions to produce glycogen. Catalyzes the reaction between ATP and alpha-D-glucose 1-phosphate (G1P) to produce pyrophosphate and ADP-Glc. The chain is Glucose-1-phosphate adenylyltransferase from Bifidobacterium animalis subsp. lactis (strain AD011).